The primary structure comprises 203 residues: Protein-methionine-sulfoxide reductase heme-binding subunit MsrQ (203 aa).

A run of 6 helical transmembrane segments spans residues 10 to 30 (IFVV…MSLL), 42 to 62 (LGLG…LQKL), 75 to 95 (LGLW…FFIL), 110 to 130 (PYII…ITSN), 147 to 167 (LVYA…RSDL), and 169 to 189 (EWSI…PAVA).

This sequence belongs to the MsrQ family. Heterodimer of a catalytic subunit (MsrP) and a heme-binding subunit (MsrQ). Requires FMN as cofactor. The cofactor is heme b.

It localises to the cell inner membrane. Functionally, part of the MsrPQ system that repairs oxidized periplasmic proteins containing methionine sulfoxide residues (Met-O), using respiratory chain electrons. Thus protects these proteins from oxidative-stress damage caused by reactive species of oxygen and chlorine generated by the host defense mechanisms. MsrPQ is essential for the maintenance of envelope integrity under bleach stress, rescuing a wide series of structurally unrelated periplasmic proteins from methionine oxidation. MsrQ provides electrons for reduction to the reductase catalytic subunit MsrP, using the quinone pool of the respiratory chain. The polypeptide is Protein-methionine-sulfoxide reductase heme-binding subunit MsrQ (Pseudomonas putida (strain GB-1)).